The following is a 103-amino-acid chain: Large ribosomal subunit protein uL24 (103 aa).

Belongs to the universal ribosomal protein uL24 family. In terms of assembly, part of the 50S ribosomal subunit.

Functionally, one of two assembly initiator proteins, it binds directly to the 5'-end of the 23S rRNA, where it nucleates assembly of the 50S subunit. Its function is as follows. One of the proteins that surrounds the polypeptide exit tunnel on the outside of the subunit. This is Large ribosomal subunit protein uL24 from Latilactobacillus sakei subsp. sakei (strain 23K) (Lactobacillus sakei subsp. sakei).